Reading from the N-terminus, the 598-residue chain is Arginine--tRNA ligase (598 aa).

Residues 131–141 (ANPTGPMHVGH) carry the 'HIGH' region motif. Residues 288-309 (KLPPPKSKKGQPPPQAQPDEEG) form a disordered region.

The protein belongs to the class-I aminoacyl-tRNA synthetase family. As to quaternary structure, monomer.

The protein localises to the cytoplasm. The catalysed reaction is tRNA(Arg) + L-arginine + ATP = L-arginyl-tRNA(Arg) + AMP + diphosphate. This Anaeromyxobacter dehalogenans (strain 2CP-C) protein is Arginine--tRNA ligase.